We begin with the raw amino-acid sequence, 423 residues long: Glycine amidinotransferase, mitochondrial (423 aa).

The N-terminal 48 residues, 1–48 (MLRVRCLRGGSRGAEAVHYIGSRLGRTLTGWVQRTFQSTQAATASSRN), are a transit peptide targeting the mitochondrion. A compositionally biased stretch (low complexity) spans 39–51 (TQAATASSRNSSA). The tract at residues 39 to 65 (TQAATASSRNSSAADDKATEPLPKDCP) is disordered. Residues Ser-46 and Ser-49 each carry the phosphoserine modification. Residues 52–61 (ADDKATEPLP) show a composition bias toward basic and acidic residues. An arginine-binding site is contributed by Asp-170. Catalysis depends on residues Asp-254 and His-303. 4 residues coordinate arginine: Asp-305, Arg-322, Ser-354, and Ser-355. Lys-385 bears the N6-acetyllysine mark. Cys-407 acts as the Amidino-cysteine intermediate in catalysis.

It belongs to the amidinotransferase family. In terms of assembly, homodimer.

Its subcellular location is the mitochondrion inner membrane. It catalyses the reaction L-arginine + glycine = guanidinoacetate + L-ornithine. It carries out the reaction 4-aminobutanoate + L-arginine = 4-guanidinobutanoate + L-ornithine. The catalysed reaction is beta-alanine + L-arginine = 3-guanidinopropanoate + L-ornithine. The enzyme catalyses taurine + L-arginine = taurocyamine + L-ornithine. It participates in amine and polyamine biosynthesis; creatine biosynthesis; creatine from L-arginine and glycine: step 1/2. Transamidinase that catalyzes the transfer of the amidino group of L-arginine onto the amino moiety of acceptor metabolites such as glycine, beta-alanine, gamma-aminobutyric acid (GABA) and taurine yielding the corresponding guanidine derivatives. Catalyzes the rate-limiting step of creatine biosynthesis, namely the transfer of the amidino group from L-arginine to glycine to generate guanidinoacetate, which is then methylated by GAMT to form creatine. Provides creatine as a source for ATP generation in tissues with high energy demands, in particular skeletal muscle, heart and brain. This is Glycine amidinotransferase, mitochondrial (GATM) from Pongo abelii (Sumatran orangutan).